Consider the following 258-residue polypeptide: Regulatory protein RecX (258 aa).

It belongs to the RecX family.

Its subcellular location is the cytoplasm. Modulates RecA activity. This is Regulatory protein RecX from Streptococcus uberis (strain ATCC BAA-854 / 0140J).